A 148-amino-acid chain; its full sequence is MSSEPPPPPLQPPTHQTSVGLLDTPRTRDRSPSPLRGNVVPSPLPTRRTRTFSATVRASQGPVYKGVCKCFCRSKGHGFITPADGGPDIFLHISDVEGEYVPVEGDEVTYKMCSIPPKNEKLQAVEVVITHLAPGTKHETWSGHVISN.

The span at 1-12 (MSSEPPPPPLQP) shows a compositional bias: pro residues. Residues 1-47 (MSSEPPPPPLQPPTHQTSVGLLDTPRTRDRSPSPLRGNVVPSPLPTR) form a disordered region. Ser-2 carries the post-translational modification N-acetylserine. A phosphoserine mark is found at Ser-31, Ser-33, and Ser-42. Position 46 is a phosphothreonine (Thr-46). Phosphoserine occurs at positions 53 and 59. Residues 63 to 130 (VYKGVCKCFC…KLQAVEVVIT (68 aa)) enclose the CSD domain. At Ser-147 the chain carries Phosphoserine.

As to quaternary structure, homodimer. Interacts with STYX. Can be phosphorylated by DYRK2 (in vitro). Dephosphorylated by calcineurin in a Ca(2+) dependent manner.

The protein localises to the cytoplasm. Its subcellular location is the P-body. It localises to the cytoplasmic granule. Binds mRNA and regulates the stability of target mRNA. This chain is Calcium-regulated heat stable protein 1 (Carhsp1), found in Mus musculus (Mouse).